We begin with the raw amino-acid sequence, 292 residues long: Phosphoenolpyruvate guanylyltransferase (292 aa).

Phosphoenolpyruvate contacts are provided by Thr168, Gly184, and Ser187. The disordered stretch occupies residues Pro243–Pro292.

It belongs to the CofC family.

The enzyme catalyses phosphoenolpyruvate + GTP + H(+) = enolpyruvoyl-2-diphospho-5'-guanosine + diphosphate. The protein operates within cofactor biosynthesis; coenzyme F420 biosynthesis. Its function is as follows. Guanylyltransferase that catalyzes the activation of phosphoenolpyruvate (PEP) as enolpyruvoyl-2-diphospho-5'-guanosine, via the condensation of PEP with GTP. It is involved in the biosynthesis of coenzyme F420, a hydride carrier cofactor. In Frankia casuarinae (strain DSM 45818 / CECT 9043 / HFP020203 / CcI3), this protein is Phosphoenolpyruvate guanylyltransferase.